Here is a 115-residue protein sequence, read N- to C-terminus: Ribonuclease P protein component (115 aa).

Belongs to the RnpA family. Consists of a catalytic RNA component (M1 or rnpB) and a protein subunit.

It catalyses the reaction Endonucleolytic cleavage of RNA, removing 5'-extranucleotides from tRNA precursor.. Functionally, RNaseP catalyzes the removal of the 5'-leader sequence from pre-tRNA to produce the mature 5'-terminus. It can also cleave other RNA substrates such as 4.5S RNA. The protein component plays an auxiliary but essential role in vivo by binding to the 5'-leader sequence and broadening the substrate specificity of the ribozyme. In Staphylococcus aureus (strain Mu3 / ATCC 700698), this protein is Ribonuclease P protein component.